The primary structure comprises 89 residues: UPF0367 protein PMM0124 (89 aa).

It belongs to the UPF0367 family.

In Prochlorococcus marinus subsp. pastoris (strain CCMP1986 / NIES-2087 / MED4), this protein is UPF0367 protein PMM0124.